The sequence spans 340 residues: MALDASSLTRKLHVFSAKYVKISEETTRRARRLVKDYIEGQIIAYITENSNIEIQKLEYTGSFYEGLKTENADEADIMVVLKTPGSGIEVVQSQVPGYVHLKARDAPMFSKYMSPKGYIKAKKLRNSWFQSYVRRAVNKIEPQPPHSEVRLVVRSHGPAVQVDIIRKGSEEMLLSVDLVPCFQVEDSWYVPKPFKGKRYLSRNELLWRKTFSPKEKQILASMDKDPNGQGGCRHELLRIVKTVVKKPVTSLPLDSYHLKAAFMHYNDRGDLDWVSEDALGKNFFGFLMELQIRMESRNLPNYWLDGINLLDDFKEDVVKQMANRLRRILNSEVRLNKILE.

Residues serine 62 and 74–76 each bind ATP; that span reads EAD. Mg(2+)-binding residues include glutamate 74, aspartate 76, and aspartate 177. ATP is bound by residues lysine 241 and 255 to 259; that span reads SYHLK. Aspartate 267 and aspartate 270 together coordinate Mn(2+).

The protein belongs to the mab-21 family. The cofactor is Mg(2+). Requires Mn(2+) as cofactor.

The catalysed reaction is 2 ATP = 3',3'-c-di-AMP + 2 diphosphate. Nucleotidyltransferase that catalyzes the formation of cyclic di-AMP (3',3'-c-di-AMP) from 2 molecules of ATP and plays a key role in innate immunity. Acts as a key sensor of double-stranded RNA (dsRNA), the presence of dsRNA in the cytoplasm being a danger signal that triggers the immune responses. Directly binds dsRNA, activating the nucleotidyltransferase activity, leading to synthesis of 3',3'-c-di-AMP, a second messenger that binds to and activates Sting, thereby triggering the immune response via activation of the NF-kappa-B transcription factor. In Stylophora pistillata (Smooth cauliflower coral), this protein is Cyclic GMP-AMP synthase-like receptor 3.